Reading from the N-terminus, the 70-residue chain is Large ribosomal subunit protein uL29 (70 aa).

It belongs to the universal ribosomal protein uL29 family.

This Clostridium botulinum (strain Eklund 17B / Type B) protein is Large ribosomal subunit protein uL29.